The chain runs to 115 residues: U3-lycotoxin-Ls1u (115 aa).

The N-terminal stretch at 1–20 is a signal peptide; the sequence is MKFVLLFGVLLVTLFSYSSA. A propeptide spanning residues 21 to 44 is cleaved from the precursor; the sequence is EMLDDFDQADEDELLSLIEKEEAR. 3 disulfides stabilise this stretch: cysteine 48–cysteine 63, cysteine 55–cysteine 72, and cysteine 62–cysteine 87.

It belongs to the neurotoxin 19 (CSTX) family. 01 subfamily. In terms of tissue distribution, expressed by the venom gland.

The protein resides in the secreted. This Lycosa singoriensis (Wolf spider) protein is U3-lycotoxin-Ls1u.